The following is a 363-amino-acid chain: Pyrimidine monooxygenase RutA (363 aa).

Residues 49-50 (IK), N115, E124, 140-141 (RY), and S190 contribute to the FMN site.

Belongs to the NtaA/SnaA/DszA monooxygenase family. RutA subfamily.

It carries out the reaction uracil + FMNH2 + NADH + O2 = (Z)-3-ureidoacrylate + FMN + NAD(+) + H2O + H(+). The catalysed reaction is thymine + FMNH2 + NADH + O2 = (Z)-2-methylureidoacrylate + FMN + NAD(+) + H2O + H(+). In terms of biological role, catalyzes the pyrimidine ring opening between N-3 and C-4 by an unusual flavin hydroperoxide-catalyzed mechanism, adding oxygen atoms in the process to yield ureidoacrylate peracid, that immediately reacts with FMN forming ureidoacrylate and FMN-N(5)-oxide. The FMN-N(5)-oxide reacts spontaneously with NADH to produce FMN. Requires the flavin reductase RutF to regenerate FMN in vivo. The protein is Pyrimidine monooxygenase RutA (rutA) of Agrobacterium fabrum (strain C58 / ATCC 33970) (Agrobacterium tumefaciens (strain C58)).